An 85-amino-acid chain; its full sequence is Small ribosomal subunit protein uS17 (85 aa).

Belongs to the universal ribosomal protein uS17 family. In terms of assembly, part of the 30S ribosomal subunit.

In terms of biological role, one of the primary rRNA binding proteins, it binds specifically to the 5'-end of 16S ribosomal RNA. This Anaeromyxobacter sp. (strain Fw109-5) protein is Small ribosomal subunit protein uS17.